The primary structure comprises 145 residues: Protein MMF1, mitochondrial (145 aa).

The transit peptide at 1–17 (MFLRNSVLRTAPVLRRG) directs the protein to the mitochondrion.

This sequence belongs to the RutC family.

It is found in the mitochondrion matrix. Its function is as follows. Plays a role in the maintenance of mitochondrial DNA. This is Protein MMF1, mitochondrial (MMF1) from Saccharomyces cerevisiae (strain ATCC 204508 / S288c) (Baker's yeast).